A 390-amino-acid polypeptide reads, in one-letter code: Chalcone synthase (390 aa).

Cysteine 164 is a catalytic residue.

The protein belongs to the thiolase-like superfamily. Chalcone/stilbene synthases family.

The enzyme catalyses (E)-4-coumaroyl-CoA + 3 malonyl-CoA + 3 H(+) = 2',4,4',6'-tetrahydroxychalcone + 3 CO2 + 4 CoA. It participates in secondary metabolite biosynthesis; flavonoid biosynthesis. Functionally, the primary product of this enzyme is 4,2',4',6'-tetrahydroxychalcone (also termed naringenin-chalcone or chalcone) which undergoes enzyme-catalyzed or spontaneous isomerization into naringenin. This chain is Chalcone synthase, found in Hypericum androsaemum (Tutsan).